Consider the following 314-residue polypeptide: Methionyl-tRNA formyltransferase (314 aa).

Position 110–113 (S110–P113) interacts with (6S)-5,6,7,8-tetrahydrofolate.

It belongs to the Fmt family.

The enzyme catalyses L-methionyl-tRNA(fMet) + (6R)-10-formyltetrahydrofolate = N-formyl-L-methionyl-tRNA(fMet) + (6S)-5,6,7,8-tetrahydrofolate + H(+). Functionally, attaches a formyl group to the free amino group of methionyl-tRNA(fMet). The formyl group appears to play a dual role in the initiator identity of N-formylmethionyl-tRNA by promoting its recognition by IF2 and preventing the misappropriation of this tRNA by the elongation apparatus. The chain is Methionyl-tRNA formyltransferase from Lactobacillus acidophilus (strain ATCC 700396 / NCK56 / N2 / NCFM).